The sequence spans 554 residues: Chaperonin GroEL (554 aa).

Residues 30-33 (TLGP), lysine 51, 87-91 (DGTTT), glycine 415, 478-480 (DAA), and aspartate 494 contribute to the ATP site.

It belongs to the chaperonin (HSP60) family. As to quaternary structure, forms a cylinder of 14 subunits composed of two heptameric rings stacked back-to-back. Interacts with the co-chaperonin GroES.

It is found in the cytoplasm. It carries out the reaction ATP + H2O + a folded polypeptide = ADP + phosphate + an unfolded polypeptide.. In terms of biological role, together with its co-chaperonin GroES, plays an essential role in assisting protein folding. The GroEL-GroES system forms a nano-cage that allows encapsulation of the non-native substrate proteins and provides a physical environment optimized to promote and accelerate protein folding. The polypeptide is Chaperonin GroEL (Pelobacter propionicus (strain DSM 2379 / NBRC 103807 / OttBd1)).